The primary structure comprises 930 residues: Zn(2)-C6 fungal-type transcription factor FTF1c (930 aa).

The zn(2)-C6 fungal-type DNA-binding region spans 137–164 (CIPCRRKKIRCSGEKPACEHCLRSYIPC).

The protein resides in the nucleus. Zn(2)-C6 fungal-type transcription factor that has a role in the establishment of the fungus within the plant and/or the progress of the disease. Regulates the expression of virulence factors such as SIX1 and SIX6. In Fusarium oxysporum f. sp. lycopersici (strain 4287 / CBS 123668 / FGSC 9935 / NRRL 34936) (Fusarium vascular wilt of tomato), this protein is Zn(2)-C6 fungal-type transcription factor FTF1c.